The sequence spans 464 residues: GTPase Der (464 aa).

2 EngA-type G domains span residues 3 to 166 and 177 to 350; these read PTIA…AVES and LKMA…QAAT. GTP contacts are provided by residues 9–16, 56–60, 118–121, 183–190, 230–234, and 295–298; these read GRPNVGKS, DTGGI, NKVD, DTAGV, and NKWD. A KH-like domain is found at 351-435; the sequence is EKYSTSFLTR…PVRIEYRSGD (85 aa).

The protein belongs to the TRAFAC class TrmE-Era-EngA-EngB-Septin-like GTPase superfamily. EngA (Der) GTPase family. In terms of assembly, associates with the 50S ribosomal subunit.

Its function is as follows. GTPase that plays an essential role in the late steps of ribosome biogenesis. The protein is GTPase Der of Teredinibacter turnerae (strain ATCC 39867 / T7901).